A 428-amino-acid chain; its full sequence is GTPase Obg (428 aa).

Residues 1-158 enclose the Obg domain; that stretch reads MFVDQVKIYV…RDVILELKVL (158 aa). The OBG-type G domain occupies 159–329; it reads ADVGLVGFPS…LLFEVANLIE (171 aa). Residues 165 to 172, 190 to 194, 212 to 215, 282 to 285, and 310 to 312 contribute to the GTP site; these read GFPSVGKS, FTTIV, DLPG, NKMD, and SAV. 2 residues coordinate Mg(2+): S172 and T192. The 79-residue stretch at 350–428 folds into the OCT domain; sequence KFETEGVKFD…ILEYEFEFID (79 aa).

Belongs to the TRAFAC class OBG-HflX-like GTPase superfamily. OBG GTPase family. As to quaternary structure, monomer. Mg(2+) is required as a cofactor.

The protein localises to the cytoplasm. Functionally, an essential GTPase which binds GTP, GDP and possibly (p)ppGpp with moderate affinity, with high nucleotide exchange rates and a fairly low GTP hydrolysis rate. Plays a role in control of the cell cycle, stress response, ribosome biogenesis and in those bacteria that undergo differentiation, in morphogenesis control. This Bacillus cereus (strain AH820) protein is GTPase Obg.